A 344-amino-acid polypeptide reads, in one-letter code: Ubiquitin-associated domain-containing protein 2 (344 aa).

Positions 1–35 (MFTSTGSSGLYKAPLSKSLLLVPSALSLLLALLLP) are cleaved as a signal peptide. Residues 36 to 91 (HCQKLFVYDLHAVKNDFQIWRLICGRIICLDLKDTFCSSLLIYNFRIFERRYGSRK) are Extracellular-facing. Residues 92–112 (FASFLLGSWVLSALFDFLLIE) form a helical membrane-spanning segment. Over 113-125 (AMQYFFGITAASN) the chain is Cytoplasmic. The chain crosses the membrane as a helical span at residues 126-146 (LPSGFLAPVFALFVPFYCSIP). The Extracellular segment spans residues 147-163 (RVQVAQILGPLSITNKT). Asn-161 is a glycosylation site (N-linked (GlcNAc...) asparagine). Residues 164–184 (LIYILGLQLFTSGSYIWIVAI) traverse the membrane as a helical segment. The Cytoplasmic portion of the chain corresponds to 185–344 (SGLMSGLCYD…NVATNFLLQH (160 aa)). The region spanning 304 to 344 (EVSEEQVARLMEMGFSRGDALEALRASNNDLNVATNFLLQH) is the UBA domain.

As to quaternary structure, interacts with FAF2. Interacts with LMBR1L. Interacts with AMFR and VCP.

The protein resides in the endoplasmic reticulum membrane. Functionally, restricts trafficking of FAF2 from the endoplasmic reticulum to lipid droplets. In association with LMBR1L and E3 ubiquitin-protein ligase AMFR, negatively regulates the canonical Wnt signaling pathway in the lymphocytes by promoting the ubiquitin-mediated degradation of CTNNB1 and Wnt receptors FZD6 and LRP6. The protein is Ubiquitin-associated domain-containing protein 2 (UBAC2) of Homo sapiens (Human).